Reading from the N-terminus, the 220-residue chain is Ribosomal RNA large subunit methyltransferase E (220 aa).

S-adenosyl-L-methionine-binding residues include glycine 60, tryptophan 62, aspartate 92, aspartate 108, and aspartate 133. The Proton acceptor role is filled by lysine 173. The interval 198 to 220 (KPKASRDKSSETFILGRQLKHPR) is disordered.

The protein belongs to the class I-like SAM-binding methyltransferase superfamily. RNA methyltransferase RlmE family.

The protein localises to the cytoplasm. The enzyme catalyses uridine(2552) in 23S rRNA + S-adenosyl-L-methionine = 2'-O-methyluridine(2552) in 23S rRNA + S-adenosyl-L-homocysteine + H(+). In terms of biological role, specifically methylates the uridine in position 2552 of 23S rRNA at the 2'-O position of the ribose in the fully assembled 50S ribosomal subunit. The chain is Ribosomal RNA large subunit methyltransferase E from Burkholderia cenocepacia (strain HI2424).